The sequence spans 153 residues: Protein SprT-like (153 aa).

The SprT-like domain maps to 7–145 (QTLVEKISIV…VCGKCHGRLS (139 aa)). Histidine 67 is a Zn(2+) binding site. Glutamate 68 is an active-site residue. Histidine 71 contributes to the Zn(2+) binding site.

Belongs to the SprT family. The cofactor is Zn(2+).

The protein localises to the cytoplasm. This chain is Protein SprT-like, found in Enterococcus faecalis (strain ATCC 700802 / V583).